A 400-amino-acid chain; its full sequence is NADH-quinone oxidoreductase subunit D (400 aa).

It belongs to the complex I 49 kDa subunit family. As to quaternary structure, NDH-1 is composed of 14 different subunits. Subunits NuoB, C, D, E, F, and G constitute the peripheral sector of the complex.

Its subcellular location is the cell inner membrane. It carries out the reaction a quinone + NADH + 5 H(+)(in) = a quinol + NAD(+) + 4 H(+)(out). Functionally, NDH-1 shuttles electrons from NADH, via FMN and iron-sulfur (Fe-S) centers, to quinones in the respiratory chain. The immediate electron acceptor for the enzyme in this species is believed to be a menaquinone. Couples the redox reaction to proton translocation (for every two electrons transferred, four hydrogen ions are translocated across the cytoplasmic membrane), and thus conserves the redox energy in a proton gradient. The protein is NADH-quinone oxidoreductase subunit D of Pelodictyon phaeoclathratiforme (strain DSM 5477 / BU-1).